The primary structure comprises 284 residues: uncharacterized protein (284 aa).

Gln-54 serves as a coordination point for FMN. Catalysis depends on Cys-83, which acts as the Proton donor. Residues Lys-125, His-153, 183 to 185 (NGG), and 207 to 208 (AN) contribute to the FMN site.

It belongs to the Dus family. FMN serves as cofactor.

Catalyzes the synthesis of dihydrouridine, a modified base found in the D-loop of most tRNAs. This is an uncharacterized protein from Caenorhabditis elegans.